A 390-amino-acid polypeptide reads, in one-letter code: 8-amino-7-oxononanoate synthase (390 aa).

Arg-19 is a substrate binding site. 106–107 (GY) is a binding site for pyridoxal 5'-phosphate. Residue His-131 coordinates substrate. Ser-176, His-204, and Thr-233 together coordinate pyridoxal 5'-phosphate. At Lys-236 the chain carries N6-(pyridoxal phosphate)lysine. Thr-350 is a binding site for substrate.

It belongs to the class-II pyridoxal-phosphate-dependent aminotransferase family. BioF subfamily. As to quaternary structure, homodimer. Pyridoxal 5'-phosphate serves as cofactor.

The catalysed reaction is 6-carboxyhexanoyl-[ACP] + L-alanine + H(+) = (8S)-8-amino-7-oxononanoate + holo-[ACP] + CO2. It functions in the pathway cofactor biosynthesis; biotin biosynthesis. Catalyzes the decarboxylative condensation of pimeloyl-[acyl-carrier protein] and L-alanine to produce 8-amino-7-oxononanoate (AON), [acyl-carrier protein], and carbon dioxide. The sequence is that of 8-amino-7-oxononanoate synthase from Pseudomonas putida (strain ATCC 700007 / DSM 6899 / JCM 31910 / BCRC 17059 / LMG 24140 / F1).